A 1374-amino-acid chain; its full sequence is Alpha,alpha-trehalose-phosphate synthase [UDP-forming] 1 (1374 aa).

3 disordered regions span residues 28 to 66, 86 to 117, and 1352 to 1374; these read DTGK…SDKD, YTPG…DDEG, and KADS…SKQQ. Composition is skewed to basic and acidic residues over residues 56–66 and 86–95; these read DPFDRPKSDKD and YTPGKEKGVD. Acidic residues-rich tracts occupy residues 96-109 and 1356-1368; these read QDES…EDHD and YYDD…DQED.

The protein in the N-terminal section; belongs to the glycosyltransferase 20 family. It in the C-terminal section; belongs to the gob-1 trehalose phosphatase family.

The enzyme catalyses D-glucose 6-phosphate + UDP-alpha-D-glucose = alpha,alpha-trehalose 6-phosphate + UDP + H(+). Functionally, catalyzes the production of trehalose from glucose-6-phosphate and UDP-alpha-D-glucose in a 2 step process. The sequence is that of Alpha,alpha-trehalose-phosphate synthase [UDP-forming] 1 (tps-1) from Caenorhabditis briggsae.